A 105-amino-acid chain; its full sequence is MNAYWFHYRASIKKEAPNYKRTFLGRARNAFLLILSEAYLLFVFLSYLIRGKSLEKRVNDEAKCSQRCVPLQLANNLAFGDRHKRSANFKKGIANTHSSLICSKP.

The helical transmembrane segment at 29-49 (NAFLLILSEAYLLFVFLSYLI) threads the bilayer.

The protein localises to the membrane. This is an uncharacterized protein from Saccharomyces cerevisiae (strain ATCC 204508 / S288c) (Baker's yeast).